The primary structure comprises 36 residues: Photosystem I reaction center subunit VIII (36 aa).

The helical transmembrane segment at 9 to 29 threads the bilayer; the sequence is ILVPLVGLVFPAVTMASLFLY.

It belongs to the PsaI family.

It localises to the plastid. It is found in the chloroplast thylakoid membrane. In terms of biological role, may help in the organization of the PsaL subunit. The protein is Photosystem I reaction center subunit VIII of Staurastrum punctulatum (Green alga).